Reading from the N-terminus, the 51-residue chain is Ovomucoid (51 aa).

The Kazal-like domain occupies 3-51 (VDCSGYPKPACTLEYFPLCGSDNQTYANKCTFCNAVVEKNVTLNHLGEC). Disulfide bonds link C5–C35, C13–C32, and C21–C51. Residue N42 is glycosylated (N-linked (GlcNAc...) asparagine).

It localises to the secreted. This chain is Ovomucoid, found in Nothoprocta perdicaria (Chilean tinamou).